We begin with the raw amino-acid sequence, 188 residues long: Peptidyl-tRNA hydrolase (188 aa).

TRNA is bound at residue Tyr17. His22 serves as the catalytic Proton acceptor. TRNA contacts are provided by Tyr65, Asn67, and Asn113.

This sequence belongs to the PTH family. Monomer.

The protein localises to the cytoplasm. It carries out the reaction an N-acyl-L-alpha-aminoacyl-tRNA + H2O = an N-acyl-L-amino acid + a tRNA + H(+). In terms of biological role, hydrolyzes ribosome-free peptidyl-tRNAs (with 1 or more amino acids incorporated), which drop off the ribosome during protein synthesis, or as a result of ribosome stalling. Catalyzes the release of premature peptidyl moieties from peptidyl-tRNA molecules trapped in stalled 50S ribosomal subunits, and thus maintains levels of free tRNAs and 50S ribosomes. The chain is Peptidyl-tRNA hydrolase from Mycoplasma pneumoniae (strain ATCC 29342 / M129 / Subtype 1) (Mycoplasmoides pneumoniae).